A 444-amino-acid chain; its full sequence is P2X purinoceptor 5 (444 aa).

Topologically, residues 1–30 are cytoplasmic; the sequence is MGQAGCKGLCLSLFDYKTEKYVIAKNKKVG. Residues 31–51 form a helical membrane-spanning segment; the sequence is LLYRLLQASILAYLVVWVFLI. At 52 to 319 the chain is on the extracellular side; the sequence is KKGYQDVDTS…RTLMKAYGIR (268 aa). Asn-77 carries N-linked (GlcNAc...) asparagine glycosylation. 3 disulfide bridges follow: Cys-118–Cys-169, Cys-129–Cys-152, and Cys-135–Cys-163. N-linked (GlcNAc...) asparagine glycosylation occurs at Asn-202. 2 disulfides stabilise this stretch: Cys-220–Cys-229 and Cys-263–Cys-272. The chain crosses the membrane as a helical span at residues 320–362; that stretch reads FDVMVNGKAGKFSIIPTIINVGSGVALMGAGAFFCDLVLIYLI. The Cytoplasmic segment spans residues 363–444; sequence KKREFYRDKK…PQLLEPHRST (82 aa). Positions 378-444 are disordered; sequence GLEDSSQEAE…PQLLEPHRST (67 aa).

It belongs to the P2X receptor family. Functional P2XRs are organized as homomeric and heteromeric trimers. Homotrimer. Forms heterotrimer with P2RX1. In terms of tissue distribution, expressed at high levels in brain and immune system.

It is found in the cell membrane. It carries out the reaction Na(+)(in) = Na(+)(out). The enzyme catalyses Ca(2+)(in) = Ca(2+)(out). The catalysed reaction is chloride(in) = chloride(out). Activated by ATP. Slowly desensitizing. Sensitive to the ATP agonist alpha/beta-methylene-ATP. Its function is as follows. ATP-gated nonselective transmembrane cation channel permeable to potassium, sodium and calcium. Unlike other P2RX receptors, the P2X5 receptor is also permeable to chloride. May play a supporting role in the inflammatory response. Non-functional. This chain is P2X purinoceptor 5, found in Homo sapiens (Human).